Here is a 220-residue protein sequence, read N- to C-terminus: GTP-binding protein YPT53 (220 aa).

Residues 19-26, 67-71, and 125-128 each bind GTP; these read GESAVGKS, DTAGQ, and NKMD. 2 S-geranylgeranyl cysteine lipidation sites follow: Cys218 and Cys220. Cys220 carries the cysteine methyl ester modification.

This sequence belongs to the small GTPase superfamily. Rab family.

It is found in the cell membrane. Functionally, required for transport in the endocytic pathway and for correct sorting of the vacuolar hydrolases suggesting a possible intersection of the endocytic with the vacuolar sorting pathway. May be involved in recruiting the MON1-CCZ1 complex to membranes enriched in phosphatidylinositol 3-phosphate (PtdIns[3]P) or other charged lipids, leading to recruitment of YPT7. This is GTP-binding protein YPT53 (YPT53) from Saccharomyces cerevisiae (strain ATCC 204508 / S288c) (Baker's yeast).